Here is a 480-residue protein sequence, read N- to C-terminus: uncharacterized protein (480 aa).

The PUA domain occupies 131-207 (KKIIKIKNDV…KVVKVRFFIK (77 aa)).

It in the C-terminal section; belongs to the PAPS reductase family.

This is an uncharacterized protein from Methanocaldococcus jannaschii (strain ATCC 43067 / DSM 2661 / JAL-1 / JCM 10045 / NBRC 100440) (Methanococcus jannaschii).